The following is a 519-amino-acid chain: Putative cysteine ligase BshC (519 aa).

Coiled-coil stretches lie at residues 51–71 and 440–464; these read LNAL…SLKE and TKLN…HEQA.

This sequence belongs to the BshC family.

In terms of biological role, involved in bacillithiol (BSH) biosynthesis. May catalyze the last step of the pathway, the addition of cysteine to glucosamine malate (GlcN-Mal) to generate BSH. This is Putative cysteine ligase BshC from Exiguobacterium sibiricum (strain DSM 17290 / CCUG 55495 / CIP 109462 / JCM 13490 / 255-15).